A 370-amino-acid polypeptide reads, in one-letter code: Uroporphyrinogen decarboxylase (370 aa).

Substrate contacts are provided by residues 29–33, aspartate 79, tyrosine 155, serine 210, and histidine 342; that span reads RQAGR.

Belongs to the uroporphyrinogen decarboxylase family. In terms of assembly, homodimer.

Its subcellular location is the cytoplasm. It carries out the reaction uroporphyrinogen III + 4 H(+) = coproporphyrinogen III + 4 CO2. It functions in the pathway porphyrin-containing compound metabolism; protoporphyrin-IX biosynthesis; coproporphyrinogen-III from 5-aminolevulinate: step 4/4. In terms of biological role, catalyzes the decarboxylation of four acetate groups of uroporphyrinogen-III to yield coproporphyrinogen-III. This is Uroporphyrinogen decarboxylase from Acidovorax sp. (strain JS42).